Consider the following 111-residue polypeptide: Cyanovirin-N homolog (111 aa).

Belongs to the cyanovirin-N family.

Its function is as follows. Mannose-binding lectin. The chain is Cyanovirin-N homolog from Neurospora crassa (strain ATCC 24698 / 74-OR23-1A / CBS 708.71 / DSM 1257 / FGSC 987).